Here is a 328-residue protein sequence, read N- to C-terminus: Olfactory receptor 4A16 (328 aa).

At 1-23 (MRPSSNVTEFVLLGLTQDPDVKK) the chain is on the extracellular side. Residue N6 is glycosylated (N-linked (GlcNAc...) asparagine). Residues 24-47 (TLFVMFLLIYIVTMVGNLLIWVTT) form a helical membrane-spanning segment. The Cytoplasmic portion of the chain corresponds to 48-55 (IGSPSLGS). The chain crosses the membrane as a helical span at residues 56–77 (LMYFFLAYLSLMDAIYSTAMSP). Topologically, residues 78-98 (KLMIDLLCDKIAISLSACMGQ) are extracellular. C95 and C187 are disulfide-bonded. The chain crosses the membrane as a helical span at residues 99–118 (LFIEHLLGGAEVFLLVVMAY). The Cytoplasmic segment spans residues 119 to 137 (DRYVAISKPLHYLNIMNRL). The chain crosses the membrane as a helical span at residues 138–156 (VCILLLVVAMIGGFVHSVV). Topologically, residues 157–193 (QIVFLYSLPICGPNVIDHSVCDMYPLLELLCLDTYFI) are extracellular. The helical transmembrane segment at 194-217 (GLTVVANGGIICMVIFTFLLISCG) threads the bilayer. Topologically, residues 218–233 (VILNFLKTYSQEERHK) are cytoplasmic. The chain crosses the membrane as a helical span at residues 234–256 (ALPTCISHIIVVALVFVPCIFMY). Residues 257 to 267 (VRPVSNFPFDK) are Extracellular-facing. A helical membrane pass occupies residues 268-287 (LMTVFYSIITLMLNPLIYSL). Over 288 to 328 (RQSEMKNAMKNLWCEKLSIVRKRVSPTLNIFIPSSKATNRR) the chain is Cytoplasmic.

This sequence belongs to the G-protein coupled receptor 1 family.

The protein resides in the cell membrane. Odorant receptor. The protein is Olfactory receptor 4A16 (OR4A16) of Homo sapiens (Human).